Consider the following 327-residue polypeptide: GPI-linked NAD(P)(+)--arginine ADP-ribosyltransferase 1 (327 aa).

Positions methionine 1–alanine 22 are cleaved as a signal peptide. Intrachain disulfides connect cysteine 53–cysteine 277 and cysteine 174–cysteine 224. Asparagine 65 carries an N-linked (GlcNAc...) asparagine glycan. Positions glutamine 73 to serine 273 constitute a TR mART core domain. Tyrosine 121 and arginine 179 together coordinate NAD(+). Catalysis depends on residues arginine 179 and serine 202. Serine 233 contributes to the NAD(+) binding site. The active site involves glutamate 240. Residue asparagine 253 is glycosylated (N-linked (GlcNAc...) asparagine). A lipid anchor (GPI-anchor amidated serine) is attached at serine 295. The propeptide at alanine 296–leucine 327 is removed in mature form.

The protein belongs to the Arg-specific ADP-ribosyltransferase family.

It is found in the sarcoplasmic reticulum membrane. The catalysed reaction is L-arginyl-[protein] + NAD(+) = N(omega)-(ADP-D-ribosyl)-L-arginyl-[protein] + nicotinamide + H(+). Functionally, has ADP-ribosyltransferase activity toward GLP1R. This chain is GPI-linked NAD(P)(+)--arginine ADP-ribosyltransferase 1 (ART1), found in Homo sapiens (Human).